The chain runs to 234 residues: Isoprenyl transferase (234 aa).

The active site involves aspartate 13. Aspartate 13 provides a ligand contact to Mg(2+). Residues 14-17 (GNGR), tryptophan 18, arginine 26, histidine 30, and 58-60 (STE) contribute to the substrate site. Asparagine 61 serves as the catalytic Proton acceptor. Substrate is bound by residues tryptophan 62, arginine 64, arginine 180, and 186-188 (RLS). Mg(2+) is bound at residue glutamate 199.

The protein belongs to the UPP synthase family. In terms of assembly, homodimer. Mg(2+) serves as cofactor.

Functionally, catalyzes the condensation of isopentenyl diphosphate (IPP) with allylic pyrophosphates generating different type of terpenoids. This chain is Isoprenyl transferase (uppS), found in Helicobacter pylori (strain ATCC 700392 / 26695) (Campylobacter pylori).